The sequence spans 212 residues: Thymidylate kinase (212 aa).

Position 7-14 (7-14 (GGEGCGKT)) interacts with ATP.

It belongs to the thymidylate kinase family.

It carries out the reaction dTMP + ATP = dTDP + ADP. In terms of biological role, phosphorylation of dTMP to form dTDP in both de novo and salvage pathways of dTTP synthesis. The polypeptide is Thymidylate kinase (Gloeobacter violaceus (strain ATCC 29082 / PCC 7421)).